The following is a 365-amino-acid chain: Phospho-N-acetylmuramoyl-pentapeptide-transferase (365 aa).

A run of 10 helical transmembrane segments spans residues 19–39 (TLLI…SSWA), 49–69 (LLIA…AVVP), 92–112 (AGTP…IAVV), 116–136 (FNPD…IGWV), 156–176 (LFLQ…YGPT), 183–203 (IMQF…FALV), 215–235 (VDGL…LLVA), 238–258 (NPAL…FVHH), 279–299 (LAAV…SGIF), and 345–365 (QIVG…MATA).

This sequence belongs to the glycosyltransferase 4 family. MraY subfamily. Mg(2+) serves as cofactor.

The protein localises to the cell inner membrane. The enzyme catalyses UDP-N-acetyl-alpha-D-muramoyl-L-alanyl-gamma-D-glutamyl-meso-2,6-diaminopimeloyl-D-alanyl-D-alanine + di-trans,octa-cis-undecaprenyl phosphate = di-trans,octa-cis-undecaprenyl diphospho-N-acetyl-alpha-D-muramoyl-L-alanyl-D-glutamyl-meso-2,6-diaminopimeloyl-D-alanyl-D-alanine + UMP. The protein operates within cell wall biogenesis; peptidoglycan biosynthesis. Functionally, catalyzes the initial step of the lipid cycle reactions in the biosynthesis of the cell wall peptidoglycan: transfers peptidoglycan precursor phospho-MurNAc-pentapeptide from UDP-MurNAc-pentapeptide onto the lipid carrier undecaprenyl phosphate, yielding undecaprenyl-pyrophosphoryl-MurNAc-pentapeptide, known as lipid I. This Synechocystis sp. (strain ATCC 27184 / PCC 6803 / Kazusa) protein is Phospho-N-acetylmuramoyl-pentapeptide-transferase.